The primary structure comprises 120 residues: UPF0102 protein Daro_0503 (120 aa).

The segment at 1–20 is disordered; the sequence is MQVKANDTTTARGREAEDRA.

It belongs to the UPF0102 family.

In Dechloromonas aromatica (strain RCB), this protein is UPF0102 protein Daro_0503.